A 96-amino-acid polypeptide reads, in one-letter code: Co-chaperonin GroES (96 aa).

Belongs to the GroES chaperonin family. In terms of assembly, heptamer of 7 subunits arranged in a ring. Interacts with the chaperonin GroEL.

The protein resides in the cytoplasm. Functionally, together with the chaperonin GroEL, plays an essential role in assisting protein folding. The GroEL-GroES system forms a nano-cage that allows encapsulation of the non-native substrate proteins and provides a physical environment optimized to promote and accelerate protein folding. GroES binds to the apical surface of the GroEL ring, thereby capping the opening of the GroEL channel. This Buchnera aphidicola subsp. Schizaphis graminum (strain Sg) protein is Co-chaperonin GroES.